The sequence spans 289 residues: Nucleotide-binding protein Franean1_2060 (289 aa).

13–20 lines the ATP pocket; sequence GLSGAGRS. Residue 64 to 67 coordinates GTP; sequence DVRG.

The protein belongs to the RapZ-like family.

Functionally, displays ATPase and GTPase activities. The sequence is that of Nucleotide-binding protein Franean1_2060 from Parafrankia sp. (strain EAN1pec).